We begin with the raw amino-acid sequence, 528 residues long: GMP synthase [glutamine-hydrolyzing] (528 aa).

In terms of domain architecture, Glutamine amidotransferase type-1 spans 13 to 204; the sequence is AIVILDFGSQ…VYHVCGCDPD (192 aa). The Nucleophile role is filled by cysteine 90. Residues histidine 178 and glutamate 180 contribute to the active site. Positions 205–403 constitute a GMPS ATP-PPase domain; sequence WTTAAFIDEA…LGLPEEIVRR (199 aa). ATP is bound at residue 232-238; the sequence is SGGVDSS.

Homodimer.

It catalyses the reaction XMP + L-glutamine + ATP + H2O = GMP + L-glutamate + AMP + diphosphate + 2 H(+). The protein operates within purine metabolism; GMP biosynthesis; GMP from XMP (L-Gln route): step 1/1. In terms of biological role, catalyzes the synthesis of GMP from XMP. In Synechococcus sp. (strain CC9605), this protein is GMP synthase [glutamine-hydrolyzing].